We begin with the raw amino-acid sequence, 114 residues long: MINTNPKRSNEPPVWLLFSAGGMISALAFPVLILILGILLPLGIISPDGIIAFAHHWFGKLVILVLTIFPAWAGLHRIHHGMHDIKVHVPSGGLIFYGLAVLYTVVAIWGVASI.

Helical transmembrane passes span 24 to 44 (ISAL…PLGI), 49 to 69 (GIIA…LTIF), and 94 to 114 (LIFY…VASI).

It belongs to the FrdD family. As to quaternary structure, part of an enzyme complex containing four subunits: a flavoprotein (FrdA), an iron-sulfur protein (FrdB), and two hydrophobic anchor proteins (FrdC and FrdD).

It localises to the cell inner membrane. In terms of biological role, anchors the catalytic components of the fumarate reductase complex to the cell membrane, binds quinones. In Actinobacillus succinogenes (strain ATCC 55618 / DSM 22257 / CCUG 43843 / 130Z), this protein is Fumarate reductase subunit D.